The chain runs to 254 residues: MTMPYYASAEQIMRDRSELARKGIARGRSVVVLTYRDGVLFVAENPSRALHKVSELYDRLGFAAVGKYNEFENLRRAGIVHADMRGYSYDRRDVTGRSLANAYAQTLGTIFTEQPKPYEVEICVAEIGRFGSSTPAQLYRITYDGSIADEQEFVVMGGTTEPIVTAMRESYQRDLDLESAVRLAVGALQKGGPAPAGTTEAEPRTLDVSALEVAVLDSNRPRRAFKRIAGSALEEMLPTPAATEDAPANGDAPS.

The interval glutamate 234 to serine 254 is disordered.

This sequence belongs to the peptidase T1A family. As to quaternary structure, the 20S proteasome core is composed of 14 alpha and 14 beta subunits that assemble into four stacked heptameric rings, resulting in a barrel-shaped structure. The two inner rings, each composed of seven catalytic beta subunits, are sandwiched by two outer rings, each composed of seven alpha subunits. The catalytic chamber with the active sites is on the inside of the barrel. Has a gated structure, the ends of the cylinder being occluded by the N-termini of the alpha-subunits. Is capped by the proteasome-associated ATPase, ARC.

It localises to the cytoplasm. It functions in the pathway protein degradation; proteasomal Pup-dependent pathway. With respect to regulation, the formation of the proteasomal ATPase ARC-20S proteasome complex, likely via the docking of the C-termini of ARC into the intersubunit pockets in the alpha-rings, may trigger opening of the gate for substrate entry. Interconversion between the open-gate and close-gate conformations leads to a dynamic regulation of the 20S proteasome proteolysis activity. Functionally, component of the proteasome core, a large protease complex with broad specificity involved in protein degradation. In Rhodococcus erythropolis (strain PR4 / NBRC 100887), this protein is Proteasome subunit alpha.